Reading from the N-terminus, the 185-residue chain is Coiled-coil domain-containing protein 32 (185 aa).

A coiled-coil region spans residues 78–98 (LASLEKKLRRIKGLNQEVTSK). The interval 159–185 (IPPESQVEKPVAEDEPAAGDKPAAAEQ) is disordered.

As to quaternary structure, interacts with AP2S1; the interaction is direct and mediates association with adaptor protein complex 2 (AP-2).

It is found in the membrane. The protein localises to the coated pit. Regulates clathrin-mediated endocytsois of cargos such as transferrin probably through the association and modulation of adaptor protein complex 2 (AP-2). Has a role in ciliogenesis. Required for proper cephalic and left/right axis development. The chain is Coiled-coil domain-containing protein 32 from Homo sapiens (Human).